A 311-amino-acid polypeptide reads, in one-letter code: Homoserine kinase (311 aa).

An ATP-binding site is contributed by 88–98 (PEGLGLGSSGA).

Belongs to the GHMP kinase family. Homoserine kinase subfamily.

It is found in the cytoplasm. It carries out the reaction L-homoserine + ATP = O-phospho-L-homoserine + ADP + H(+). It participates in amino-acid biosynthesis; L-threonine biosynthesis; L-threonine from L-aspartate: step 4/5. Its function is as follows. Catalyzes the ATP-dependent phosphorylation of L-homoserine to L-homoserine phosphate. In Saccharolobus islandicus (strain L.S.2.15 / Lassen #1) (Sulfolobus islandicus), this protein is Homoserine kinase.